Here is a 218-residue protein sequence, read N- to C-terminus: Probable GTP-binding protein EngB (218 aa).

The 172-residue stretch at 21–192 (NAPQIALAGR…WQELHRLAFP (172 aa)) folds into the EngB-type G domain. GTP is bound by residues 29 to 36 (GRSNVGKS), 56 to 60 (GKTRS), 75 to 78 (DLPG), 142 to 145 (TKAD), and 171 to 173 (FSS). Positions 36 and 58 each coordinate Mg(2+). A disordered region spans residues 194–218 (MAFDTPSDGAPEPADEPEAASERAE).

It belongs to the TRAFAC class TrmE-Era-EngA-EngB-Septin-like GTPase superfamily. EngB GTPase family. Mg(2+) serves as cofactor.

Necessary for normal cell division and for the maintenance of normal septation. The chain is Probable GTP-binding protein EngB from Oleidesulfovibrio alaskensis (strain ATCC BAA-1058 / DSM 17464 / G20) (Desulfovibrio alaskensis).